The sequence spans 122 residues: Large ribosomal subunit protein uL14 (122 aa).

Belongs to the universal ribosomal protein uL14 family. Part of the 50S ribosomal subunit. Forms a cluster with proteins L3 and L19. In the 70S ribosome, L14 and L19 interact and together make contacts with the 16S rRNA in bridges B5 and B8.

Functionally, binds to 23S rRNA. Forms part of two intersubunit bridges in the 70S ribosome. The polypeptide is Large ribosomal subunit protein uL14 (Alkaliphilus oremlandii (strain OhILAs) (Clostridium oremlandii (strain OhILAs))).